Here is a 1296-residue protein sequence, read N- to C-terminus: Phosphoribosylformylglycinamidine synthase (1296 aa).

The interval tryptophan 304 to arginine 323 is disordered. Residues glycine 306–aspartate 317 and alanine 677 each bind ATP. The Mg(2+) site is built by aspartate 678, glutamate 717, asparagine 721, and aspartate 885. Residue serine 887 coordinates ATP. Residues proline 1000–glutamate 1013 are compositionally biased toward basic and acidic residues. A disordered region spans residues proline 1000–asparagine 1019. The Glutamine amidotransferase type-1 domain occupies valine 1043–glycine 1296. Residue cysteine 1136 is the Nucleophile of the active site. Catalysis depends on residues histidine 1261 and glutamate 1263.

It in the N-terminal section; belongs to the FGAMS family. As to quaternary structure, monomer.

It localises to the cytoplasm. The enzyme catalyses N(2)-formyl-N(1)-(5-phospho-beta-D-ribosyl)glycinamide + L-glutamine + ATP + H2O = 2-formamido-N(1)-(5-O-phospho-beta-D-ribosyl)acetamidine + L-glutamate + ADP + phosphate + H(+). The protein operates within purine metabolism; IMP biosynthesis via de novo pathway; 5-amino-1-(5-phospho-D-ribosyl)imidazole from N(2)-formyl-N(1)-(5-phospho-D-ribosyl)glycinamide: step 1/2. In terms of biological role, phosphoribosylformylglycinamidine synthase involved in the purines biosynthetic pathway. Catalyzes the ATP-dependent conversion of formylglycinamide ribonucleotide (FGAR) and glutamine to yield formylglycinamidine ribonucleotide (FGAM) and glutamate. The protein is Phosphoribosylformylglycinamidine synthase of Yersinia pseudotuberculosis serotype I (strain IP32953).